The sequence spans 1218 residues: Protein jagged-1 (1218 aa).

An N-terminal signal peptide occupies residues M1–G33. At Q34–D1067 the chain is on the extracellular side. An N-linked (GlcNAc...) asparagine glycan is attached at N143. A DSL domain is found at V185–C229. Disulfide bonds link C187–C196 and C200–C212. Positions F199–F207 are important for interaction with NOTCH1. N217 is a glycosylation site (N-linked (GlcNAc...) asparagine). 40 cysteine pairs are disulfide-bonded: C220–C229, C234–C245, C238–C251, C253–C262, C265–C276, C271–C282, C284–C293, C300–C312, C306–C322, C324–C333, C340–C351, C345–C360, C362–C371, C378–C389, C383–C398, C400–C409, C416–C427, C421–C436, C438–C447, C454–C464, C458–C473, C475–C484, C491–C502, C496–C511, C513–C522, C529–C540, C534–C549, C551–C560, C578–C605, C599–C615, C617–C626, C633–C644, C638–C653, C655–C664, C671–C682, C676–C691, C693–C702, C709–C720, C714–C729, and C731–C740. The EGF-like 1 domain maps to N230–D263. An EGF-like 2; atypical domain is found at K264–D294. EGF-like domains lie at D296 to E334 and A336 to S372. The region spanning N374–Q410 is the EGF-like 5; calcium-binding domain. N382 is a glycosylation site (N-linked (GlcNAc...) asparagine). The EGF-like 6; calcium-binding domain maps to D412 to D448. Residues N450 to E485 form the EGF-like 7; calcium-binding domain. The 37-residue stretch at D487 to Q523 folds into the EGF-like 8; calcium-binding domain. EGF-like domains lie at D525–S561 and D586–H627. N-linked (GlcNAc...) asparagine glycosylation is present at N559. In terms of domain architecture, EGF-like 11; calcium-binding spans N629–E665. The EGF-like 12; calcium-binding domain maps to N667–H703. EGF-like domains follow at residues R705–N741 and R744–T780. N-linked (GlcNAc...) asparagine glycosylation is present at N745. 9 cysteine pairs are disulfide-bonded: C748-C759, C753-C768, C770-C779, C786-C797, C791-C806, C808-C817, C824-C835, C829-C844, and C846-C855. One can recognise an EGF-like 15; calcium-binding domain in the interval N782–R818. An EGF-like 16; calcium-binding domain is found at N820–H856. N-linked (GlcNAc...) asparagine glycans are attached at residues N960, N991, N1045, and N1064. Residues F1068–V1093 form a helical membrane-spanning segment. The Cytoplasmic segment spans residues R1094 to V1218. A disordered region spans residues R1181–V1218. Positions G1188–K1199 are enriched in polar residues.

Interacts with NOTCH1, NOTCH2 and NOTCH3. In terms of tissue distribution, widely expressed in many tissues, with highest expression in brain, heart, muscle and thymus.

It is found in the membrane. The protein localises to the cell membrane. Functionally, ligand for multiple Notch receptors and involved in the mediation of Notch signaling. May be involved in cell-fate decisions during hematopoiesis. Seems to be involved in early and late stages of mammalian cardiovascular development. Inhibits myoblast differentiation. May regulate fibroblast growth factor-induced angiogenesis. The protein is Protein jagged-1 (Jag1) of Mus musculus (Mouse).